The chain runs to 238 residues: Purine nucleoside phosphorylase DeoD-type (238 aa).

H4 is an a purine D-ribonucleoside binding site. Residues G20, R24, R43, and 87 to 90 (RVGS) each bind phosphate. Residues 179–181 (EME) and 203–204 (SD) each bind a purine D-ribonucleoside. The Proton donor role is filled by D204.

It belongs to the PNP/UDP phosphorylase family. As to quaternary structure, homohexamer; trimer of homodimers.

It catalyses the reaction a purine D-ribonucleoside + phosphate = a purine nucleobase + alpha-D-ribose 1-phosphate. The enzyme catalyses a purine 2'-deoxy-D-ribonucleoside + phosphate = a purine nucleobase + 2-deoxy-alpha-D-ribose 1-phosphate. In terms of biological role, catalyzes the reversible phosphorolytic breakdown of the N-glycosidic bond in the beta-(deoxy)ribonucleoside molecules, with the formation of the corresponding free purine bases and pentose-1-phosphate. This is Purine nucleoside phosphorylase DeoD-type from Haemophilus ducreyi (strain 35000HP / ATCC 700724).